The following is a 509-amino-acid chain: Maturase K (509 aa).

Belongs to the intron maturase 2 family. MatK subfamily.

It is found in the plastid. The protein localises to the chloroplast. In terms of biological role, usually encoded in the trnK tRNA gene intron. Probably assists in splicing its own and other chloroplast group II introns. The protein is Maturase K of Clematis florida (Asian virgin's bower).